Consider the following 725-residue polypeptide: ATP-dependent DNA helicase II subunit 2 (725 aa).

A Ku domain is found at 232–478 (LTLGDPQKYP…QQAMSDYVDA (247 aa)).

It belongs to the ku80 family. In terms of assembly, heterodimer of mus-51/ku70 and mus-52/ku80.

It is found in the nucleus. The protein localises to the chromosome. The protein resides in the telomere. It carries out the reaction ATP + H2O = ADP + phosphate + H(+). Functionally, single-stranded DNA-dependent ATP-dependent helicase. Involved in non-homologous end joining (NHEJ) DNA double strand break repair. DNA-binding is sequence-independent but has a high affinity to nicks in double-stranded DNA and to the ends of duplex DNA. Binds to naturally occurring chromosomal ends, and therefore provides chromosomal end protection. Required also for telomere recombination to repair telomeric ends in the absence of telomerase. ku70, of the ku70/ku80 heterodimer, binds to the stem loop of tlc1, the RNA component of telomerase. Involved in telomere maintenance. Interacts with telomeric repeats and subtelomeric sequences thereby controlling telomere length and protecting against subtelomeric rearrangement. Maintains telomeric chromatin, which is involved in silencing the expression of genes located at the telomere. Required for mating-type switching. The polypeptide is ATP-dependent DNA helicase II subunit 2 (mus-52) (Neurospora crassa (strain ATCC 24698 / 74-OR23-1A / CBS 708.71 / DSM 1257 / FGSC 987)).